We begin with the raw amino-acid sequence, 256 residues long: Alcohol dehydrogenase (256 aa).

Residue 12-35 (FVAGLGGIGLDTSKELVKRDLKNL) participates in NAD(+) binding. Ser-140 lines the substrate pocket. Catalysis depends on Tyr-153, which acts as the Proton acceptor.

Belongs to the short-chain dehydrogenases/reductases (SDR) family. As to quaternary structure, homodimer.

It carries out the reaction a primary alcohol + NAD(+) = an aldehyde + NADH + H(+). It catalyses the reaction a secondary alcohol + NAD(+) = a ketone + NADH + H(+). The polypeptide is Alcohol dehydrogenase (Adh) (Drosophila erecta (Fruit fly)).